Here is a 386-residue protein sequence, read N- to C-terminus: MFFRLDLESCMKFEKLGQSGRARRGRLTLAHGVVETPVFMPVGTYGTVKGMLPRDIEEIQAQIILGNTFHLYLRPGLEVIKEHGGLHEFIKWDKPILTDSGGFQVFSLGAMRKIKEEGVTFRSPIDGSKVFLSPEISMEIQQVLNSDIVMIFDECTPYPATHEEAQKSLQLSLRWAKRCKTHHHEQLNNTNALFGIIQGGMYEDLRDESLNGLLEIGFDGYAIGGLSVGEPKEEMIKVLDYLPAKMPEDKPRYLMGVGKPEDIVEAVRRGVDMFDCVMPTRNARNGHYFVTDGLVRIRNSKYRHDQSPLDPHCDCYTCKNFTRAYLYHLEKCGEMLASMLGTIHNLRYYQRLTQGIRDALEQGTFDEFVTDFYTRRGLDVPPAPVD.

Catalysis depends on D99, which acts as the Proton acceptor. Substrate-binding positions include 99–103, D153, Q198, and G225; that span reads DSGGF. Residues 256–262 form an RNA binding region; that stretch reads GVGKPED. The active-site Nucleophile is the D275. The interval 280 to 284 is RNA binding; important for wobble base 34 recognition; that stretch reads TRNAR. Zn(2+) is bound by residues C313, C315, C318, and H344.

It belongs to the queuine tRNA-ribosyltransferase family. In terms of assembly, homodimer. Within each dimer, one monomer is responsible for RNA recognition and catalysis, while the other monomer binds to the replacement base PreQ1. The cofactor is Zn(2+).

It carries out the reaction 7-aminomethyl-7-carbaguanine + guanosine(34) in tRNA = 7-aminomethyl-7-carbaguanosine(34) in tRNA + guanine. It participates in tRNA modification; tRNA-queuosine biosynthesis. Its function is as follows. Catalyzes the base-exchange of a guanine (G) residue with the queuine precursor 7-aminomethyl-7-deazaguanine (PreQ1) at position 34 (anticodon wobble position) in tRNAs with GU(N) anticodons (tRNA-Asp, -Asn, -His and -Tyr). Catalysis occurs through a double-displacement mechanism. The nucleophile active site attacks the C1' of nucleotide 34 to detach the guanine base from the RNA, forming a covalent enzyme-RNA intermediate. The proton acceptor active site deprotonates the incoming PreQ1, allowing a nucleophilic attack on the C1' of the ribose to form the product. After dissociation, two additional enzymatic reactions on the tRNA convert PreQ1 to queuine (Q), resulting in the hypermodified nucleoside queuosine (7-(((4,5-cis-dihydroxy-2-cyclopenten-1-yl)amino)methyl)-7-deazaguanosine). This is Queuine tRNA-ribosyltransferase from Acinetobacter baylyi (strain ATCC 33305 / BD413 / ADP1).